The following is a 407-amino-acid chain: WEB family protein At3g51720 (407 aa).

3 coiled-coil regions span residues 72-99 (KVLK…DKEN), 128-217 (SVGL…ARAA), and 247-278 (EEIL…EAEE).

It belongs to the WEB family.

The sequence is that of WEB family protein At3g51720 from Arabidopsis thaliana (Mouse-ear cress).